Reading from the N-terminus, the 126-residue chain is uncharacterized protein (126 aa).

A signal peptide spans 1–27; it reads MKNLFIFLSLMMMFVLTACGGSKYDDA. The interval 93–126 is disordered; it reads MTDMPGNGENDRLGLSKKTPDYEEVKGEETELEE. Basic and acidic residues predominate over residues 101-126; it reads ENDRLGLSKKTPDYEEVKGEETELEE.

This is an uncharacterized protein from Bacillus subtilis (strain 168).